Here is a 194-residue protein sequence, read N- to C-terminus: Holliday junction branch migration complex subunit RuvA (194 aa).

The tract at residues 1-64 is domain I; it reads MIGRLRGVLT…DDSAALYGFL (64 aa). The domain II stretch occupies residues 65–140; sequence SESERRLFRH…RAADFNNGIS (76 aa). The tract at residues 140–144 is flexible linker; that stretch reads STSGK. Residues 145–194 are domain III; sequence LNLDTVSEAALALQQLGYKPAEAARMARDAGTESDDVAIVIKKALQTVLR.

This sequence belongs to the RuvA family. In terms of assembly, homotetramer. Forms an RuvA(8)-RuvB(12)-Holliday junction (HJ) complex. HJ DNA is sandwiched between 2 RuvA tetramers; dsDNA enters through RuvA and exits via RuvB. An RuvB hexamer assembles on each DNA strand where it exits the tetramer. Each RuvB hexamer is contacted by two RuvA subunits (via domain III) on 2 adjacent RuvB subunits; this complex drives branch migration. In the full resolvosome a probable DNA-RuvA(4)-RuvB(12)-RuvC(2) complex forms which resolves the HJ.

The protein localises to the cytoplasm. The RuvA-RuvB-RuvC complex processes Holliday junction (HJ) DNA during genetic recombination and DNA repair, while the RuvA-RuvB complex plays an important role in the rescue of blocked DNA replication forks via replication fork reversal (RFR). RuvA specifically binds to HJ cruciform DNA, conferring on it an open structure. The RuvB hexamer acts as an ATP-dependent pump, pulling dsDNA into and through the RuvAB complex. HJ branch migration allows RuvC to scan DNA until it finds its consensus sequence, where it cleaves and resolves the cruciform DNA. This is Holliday junction branch migration complex subunit RuvA from Xylella fastidiosa (strain M23).